We begin with the raw amino-acid sequence, 414 residues long: Cytochrome c biogenesis protein Ccs1 (414 aa).

Transmembrane regions (helical) follow at residues 14–34 (LTVA…GTVI), 73–93 (SWWF…CTIT), and 159–179 (VSPI…MLST).

Belongs to the Ccs1/CcsB family. May interact with CcsA.

The protein resides in the plastid. Its subcellular location is the chloroplast thylakoid membrane. Functionally, required during biogenesis of c-type cytochromes (cytochrome c6 and cytochrome f) at the step of heme attachment. The chain is Cytochrome c biogenesis protein Ccs1 from Guillardia theta (Cryptophyte).